The chain runs to 154 residues: Periplasmic nitrate reductase, electron transfer subunit (154 aa).

The first 24 residues, 1-24 (MSMHPALRLLATVLVALGAGPAFT), serve as a signal peptide directing secretion. The segment at 27–47 (APRLTGADRPMSEVAAPPLPE) is disordered. The heme c site is built by His68, Cys82, Cys85, His86, His103, Cys122, Cys125, and His126.

The protein belongs to the NapB family. As to quaternary structure, component of the periplasmic nitrate reductase NapAB complex composed of NapA and NapB. In terms of processing, binds 2 heme C groups per subunit.

The protein resides in the periplasm. Electron transfer subunit of the periplasmic nitrate reductase complex NapAB. Receives electrons from the membrane-anchored tetraheme c-type NapC protein and transfers these to NapA subunit, thus allowing electron flow between membrane and periplasm. Essential for periplasmic nitrate reduction with nitrate as the terminal electron acceptor. This Cereibacter sphaeroides (Rhodobacter sphaeroides) protein is Periplasmic nitrate reductase, electron transfer subunit.